The sequence spans 164 residues: UPF0304 protein HSM_1818 (164 aa).

It belongs to the UPF0304 family.

This chain is UPF0304 protein HSM_1818, found in Histophilus somni (strain 2336) (Haemophilus somnus).